The following is a 253-amino-acid chain: Hydroxyacylglutathione hydrolase (253 aa).

The Zn(2+) site is built by His-54, His-56, Asp-58, His-59, His-110, Asp-127, and His-165.

This sequence belongs to the metallo-beta-lactamase superfamily. Glyoxalase II family. In terms of assembly, monomer. Requires Zn(2+) as cofactor.

It catalyses the reaction an S-(2-hydroxyacyl)glutathione + H2O = a 2-hydroxy carboxylate + glutathione + H(+). The protein operates within secondary metabolite metabolism; methylglyoxal degradation; (R)-lactate from methylglyoxal: step 2/2. Thiolesterase that catalyzes the hydrolysis of S-D-lactoyl-glutathione to form glutathione and D-lactic acid. This is Hydroxyacylglutathione hydrolase from Idiomarina loihiensis (strain ATCC BAA-735 / DSM 15497 / L2-TR).